The sequence spans 484 residues: Cobyric acid synthase (484 aa).

One can recognise a GATase cobBQ-type domain in the interval 253–430; the sequence is SLRVAVVRFP…WHGAFEHDEF (178 aa). Residue Cys-334 is the Nucleophile of the active site. His-422 is an active-site residue.

It belongs to the CobB/CobQ family. CobQ subfamily.

Its pathway is cofactor biosynthesis; adenosylcobalamin biosynthesis. In terms of biological role, catalyzes amidations at positions B, D, E, and G on adenosylcobyrinic A,C-diamide. NH(2) groups are provided by glutamine, and one molecule of ATP is hydrogenolyzed for each amidation. The protein is Cobyric acid synthase of Cutibacterium acnes (strain DSM 16379 / KPA171202) (Propionibacterium acnes).